Reading from the N-terminus, the 325-residue chain is ATP synthase gamma chain (325 aa).

The protein belongs to the ATPase gamma chain family. F-type ATPases have 2 components, CF(1) - the catalytic core - and CF(0) - the membrane proton channel. CF(1) has five subunits: alpha(3), beta(3), gamma(1), delta(1), epsilon(1). CF(0) has three main subunits: a, b and c.

The protein resides in the cell membrane. Produces ATP from ADP in the presence of a proton gradient across the membrane. The gamma chain is believed to be important in regulating ATPase activity and the flow of protons through the CF(0) complex. This chain is ATP synthase gamma chain, found in Corynebacterium urealyticum (strain ATCC 43042 / DSM 7109).